We begin with the raw amino-acid sequence, 423 residues long: F-box/LRR-repeat protein 2 (423 aa).

An F-box domain is found at 9-55; sequence GRINKKLPKELLLRIFSFLDIVTLCRCAQISKAWNILALDGSNWQRI. 13 LRR repeats span residues 61–87, 88–113, 114–139, 140–165, 166–191, 192–217, 218–243, 244–269, 270–295, 296–321, 322–350, 351–375, and 376–401; these read QTDV…SLRG, CIGV…NLNG, CTKI…DLTS, CVSI…NLSW, CDQI…LLRG, CTQL…NLQS, CSRI…CLSG, CSNL…EAAR, CSHL…DLEE, CILI…SLSH, CELI…ELDN, CLLI…ELYD, and CQQV…AYFA. The tract at residues 80 to 90 is interaction with Calmodulin; it reads LRKLSLRGCIG. Residue Lys-201 forms a Glycyl lysine isopeptide (Lys-Gly) (interchain with G-Cter in ubiquitin) linkage. Position 404 is a phosphothreonine (Thr-404). The S-geranylgeranyl cysteine moiety is linked to residue Cys-420. The CAAX motif motif lies at 420 to 423; it reads CVIL.

In terms of assembly, part of the SCF (SKP1-CUL1-F-box) E3 ubiquitin-protein ligase complex SCF(FBXL2) composed of CUL1, SKP1, RBX1 and FBXL2. Interacts with calmodulin; may antagonize substrate ubiquitination by SCF(FBXL2). May interact with PIK3R1. Interacts with PTPN13. In terms of processing, phosphorylated by GSK-beta (GSK3B), promoting recognition by FBXO3, leading to its ubiquitination by the SCF(FBXO3) complex. Post-translationally, ubiquitinated at Lys-201 by the SCF(FBXO3) complex in response to lipopolysaccharide (LPS), leading to its degradation by the proteasome.

The protein resides in the membrane. It participates in protein modification; protein ubiquitination. Functionally, calcium-activated substrate recognition component of the SCF (SKP1-cullin-F-box protein) E3 ubiquitin-protein ligase complex, SCF(FBXL2), which mediates the ubiquitination and subsequent proteasomal degradation of target proteins. Unlike many F-box proteins, FBXL2 does not seem to target phosphodegron within its substrates but rather calmodulin-binding motifs and is thereby antagonized by calmodulin. This is the case for the cyclins CCND2 and CCND3 which polyubiquitination and subsequent degradation are inhibited by calmodulin. Through CCND2 and CCND3 degradation induces cell-cycle arrest in G(0). SCF(FBXL2) also mediates PIK3R2 ubiquitination and proteasomal degradation thereby regulating phosphatidylinositol 3-kinase signaling and autophagy. PCYT1A monoubiquitination by SCF(FBXL2) and subsequent degradation regulates synthesis of phosphatidylcholine, which is utilized for formation of membranes and of pulmonary surfactant. The SCF(FBXL2) complex acts as a regulator of inflammation by mediating ubiquitination and degradation of TRAF proteins (TRAF1, TRAF2, TRAF3, TRAF4, TRAF5 and TRAF6). The SCF(FBXL2) complex acts as a negative regulator of the NLRP3 inflammasome by mediating ubiquitination and degradation of NLRP3. The protein is F-box/LRR-repeat protein 2 of Pongo abelii (Sumatran orangutan).